The chain runs to 1080 residues: Protein transport protein SEC24 C (1080 aa).

The segment covering 1–10 (MVAPVPPGAP) has biased composition (pro residues). Disordered stretches follow at residues 1 to 189 (MVAP…SGMI), 201 to 220 (GSGG…TTPQ), and 316 to 367 (TAMG…SDYV). Positions 12–43 (PNSQQNSGPPNFYPGSQGNSNALADNMQNLSL) are enriched in polar residues. Residues 45–70 (RPPPMMPGSGPRPPPPFGQSPQPFPQ) show a composition bias toward pro residues. Low complexity-rich tracts occupy residues 71–84 (QSPS…GPSP), 142–160 (PAAS…SVAA), and 178–189 (GSGMSMPPSGMI). Polar residues predominate over residues 340–356 (GSSSSPTVFETRQSNQA). Positions 430, 433, 452, and 455 each coordinate Zn(2+). The tract at residues 430 to 455 (CSRCKGYINPFMKFIDQGRKFICNFC) is zinc finger-like.

It belongs to the SEC23/SEC24 family. SEC24 subfamily. Component of the coat protein complex II (COPII), composed of at least five proteins: the Sec23/24 complex, the Sec13/31 complex and Sar1. As to expression, mainly expressed at low levels in pollen, leaves, roots and stems.

The protein resides in the cytoplasmic vesicle. It localises to the COPII-coated vesicle membrane. Its subcellular location is the endoplasmic reticulum membrane. The protein localises to the golgi apparatus membrane. Component of the coat protein complex II (COPII), that covers ER-derived vesicles involved in transport from the endoplasmic reticulum to the Golgi apparatus. COPII is composed of at least five proteins: the SEC23/24 complex, the SEC13/31 complex, and the protein SAR1. Acts in the cytoplasm to promote the transport of secretory, plasma membrane, and vacuolar proteins from the endoplasmic reticulum to the Golgi complex. This chain is Protein transport protein SEC24 C, found in Arabidopsis thaliana (Mouse-ear cress).